Consider the following 972-residue polypeptide: Coatomer subunit beta (972 aa).

HEAT repeat units lie at residues 79-113, 133-170, 317-354, 397-434, and 481-518; these read LLYF…DLQH, ELLE…VSEH, GCLE…SRNI, EIAA…LYPQ, and RQSI…QAGP. The segment at 494–522 is disordered; it reads LKNQRKSQDEDDEATEESATKQAGPVILP.

As to quaternary structure, oligomeric complex that consists of at least the alpha, beta, beta', gamma, delta, epsilon and zeta subunits.

It is found in the cytoplasm. Its subcellular location is the golgi apparatus membrane. It localises to the cytoplasmic vesicle. The protein localises to the COPI-coated vesicle membrane. Functionally, the coatomer is a cytosolic protein complex that binds to dilysine motifs and reversibly associates with Golgi non-clathrin-coated vesicles, which further mediate biosynthetic protein transport from the ER, via the Golgi up to the trans Golgi network. Coatomer complex is required for budding from Golgi membranes, and is essential for the retrograde Golgi-to-ER transport of dilysine-tagged proteins. This is Coatomer subunit beta from Candida glabrata (strain ATCC 2001 / BCRC 20586 / JCM 3761 / NBRC 0622 / NRRL Y-65 / CBS 138) (Yeast).